Here is a 376-residue protein sequence, read N- to C-terminus: Actin-related protein T1 (376 aa).

This sequence belongs to the actin family.

The protein resides in the cytoplasm. It is found in the cytoskeleton. It localises to the nucleus. Its subcellular location is the cytoplasmic vesicle. The protein localises to the secretory vesicle. The protein resides in the acrosome. Negatively regulates the Hedgehog (SHH) signaling. Binds to the promoter of the SHH signaling mediator, GLI1, and inhibits its expression. This Rattus norvegicus (Rat) protein is Actin-related protein T1 (Actrt1).